Here is a 297-residue protein sequence, read N- to C-terminus: Transmembrane protein 178A (297 aa).

Residues 1–25 (MEPRALVTALSLGLSLCSLGLLVTA) form the signal peptide. The Extracellular segment spans residues 26 to 179 (IFTDHWYETD…LLHLRRITAG (154 aa)). Positions 41 to 57 (ESCERSRAGADPPDQKN) are enriched in basic and acidic residues. Residues 41–86 (ESCERSRAGADPPDQKNRLMPLSHLPLRDSPPLGRRLLPGGPGRSD) form a disordered region. Positions 68 to 79 (RDSPPLGRRLLP) are enriched in low complexity. A glycan (N-linked (GlcNAc...) asparagine) is linked at asparagine 158. The helical transmembrane segment at 180 to 200 (FLGMAVAVLLCGCIVATVSFF) threads the bilayer. Over 201 to 208 (WEESLTQH) the chain is Cytoplasmic. Residues 209–229 (VAGLLFLMTGIFCTISLCTYA) traverse the membrane as a helical segment. Residues 230-257 (ASVSYDLNRVPKLIYSLPHDVEHGYSWS) lie on the Extracellular side of the membrane. Residues 258-278 (IFCAWCSLGFIVAAGGLCIAY) traverse the membrane as a helical segment. Over 279–297 (PFISRTKIAHLKSGRDSTV) the chain is Cytoplasmic.

This sequence belongs to the TMEM178 family. Interacts with STIM1.

The protein localises to the endoplasmic reticulum membrane. Acts as a negative regulator of osteoclast differentiation in basal and inflammatory conditions by regulating TNFSF11-induced Ca (2+) fluxes, thereby controlling the induction of NFATC1. The sequence is that of Transmembrane protein 178A (Tmem178a) from Rattus norvegicus (Rat).